Reading from the N-terminus, the 121-residue chain is Large ribosomal subunit protein bL19 (121 aa).

Belongs to the bacterial ribosomal protein bL19 family.

In terms of biological role, this protein is located at the 30S-50S ribosomal subunit interface and may play a role in the structure and function of the aminoacyl-tRNA binding site. The sequence is that of Large ribosomal subunit protein bL19 from Chlorobium phaeovibrioides (strain DSM 265 / 1930) (Prosthecochloris vibrioformis (strain DSM 265)).